We begin with the raw amino-acid sequence, 326 residues long: MNFGLFFLNFQPEGMTSEMVLDNMVDTVALVDKDDYHFKRVLVSEHHFSKNGIIGEPLTAISFLLGLTKRIEIGSLNQVITTHHPVRIGEQTGLLDQMSYGRFVLGLSDCVNDFEMDFFKRKRSSQQQQFEACYEILNEALTTNYCQADDDFFNFPRISVNPHCISEVKQYILASSMGVVEWAARKGLPLTYRWSDSLAEKEKYYQRYLAVAKENNIDVSNIDHQFPLLVNINENRRIARDEVREYIQSYVSEAYPTDPNIELRVEELIEQHAVGKVDEYYDSTMHAVKVTGSKNLLLSFESMKNKDDVTKLINMFNQKIKDNLIK.

This sequence belongs to the bacterial luciferase oxidoreductase family. In terms of assembly, heterodimer of an alpha and a beta chain.

It catalyses the reaction a long-chain fatty aldehyde + FMNH2 + O2 = a long-chain fatty acid + hnu + FMN + H2O + 2 H(+). In terms of biological role, light-emitting reaction in luminous bacteria. The specific role of the beta subunit is unknown, but it is absolutely required for bioluminescence activity. The polypeptide is Alkanal monooxygenase beta chain (luxB) (Photobacterium leiognathi).